The primary structure comprises 303 residues: Succinate--CoA ligase [ADP-forming] subunit alpha (303 aa).

Residues 20–23, Lys46, and 108–110 contribute to the CoA site; these read TGSE and ITE. Tyr173 provides a ligand contact to substrate. The active-site Tele-phosphohistidine intermediate is the His259.

This sequence belongs to the succinate/malate CoA ligase alpha subunit family. In terms of assembly, heterotetramer of two alpha and two beta subunits.

It carries out the reaction succinate + ATP + CoA = succinyl-CoA + ADP + phosphate. It catalyses the reaction GTP + succinate + CoA = succinyl-CoA + GDP + phosphate. It participates in carbohydrate metabolism; tricarboxylic acid cycle; succinate from succinyl-CoA (ligase route): step 1/1. Functionally, succinyl-CoA synthetase functions in the citric acid cycle (TCA), coupling the hydrolysis of succinyl-CoA to the synthesis of either ATP or GTP and thus represents the only step of substrate-level phosphorylation in the TCA. The alpha subunit of the enzyme binds the substrates coenzyme A and phosphate, while succinate binding and nucleotide specificity is provided by the beta subunit. In Mycobacterium bovis (strain ATCC BAA-935 / AF2122/97), this protein is Succinate--CoA ligase [ADP-forming] subunit alpha.